A 393-amino-acid chain; its full sequence is NAD(P)H-quinone oxidoreductase subunit H, chloroplastic (393 aa).

Belongs to the complex I 49 kDa subunit family. In terms of assembly, NDH is composed of at least 16 different subunits, 5 of which are encoded in the nucleus.

The protein localises to the plastid. It is found in the chloroplast thylakoid membrane. It catalyses the reaction a plastoquinone + NADH + (n+1) H(+)(in) = a plastoquinol + NAD(+) + n H(+)(out). The catalysed reaction is a plastoquinone + NADPH + (n+1) H(+)(in) = a plastoquinol + NADP(+) + n H(+)(out). Functionally, NDH shuttles electrons from NAD(P)H:plastoquinone, via FMN and iron-sulfur (Fe-S) centers, to quinones in the photosynthetic chain and possibly in a chloroplast respiratory chain. The immediate electron acceptor for the enzyme in this species is believed to be plastoquinone. Couples the redox reaction to proton translocation, and thus conserves the redox energy in a proton gradient. The polypeptide is NAD(P)H-quinone oxidoreductase subunit H, chloroplastic (Lepidium virginicum (Virginia pepperweed)).